A 1132-amino-acid polypeptide reads, in one-letter code: Eisosome protein SEG2 (1132 aa).

A compositionally biased stretch (polar residues) spans 76–95 (KRTSSLPNQGHKNTSNNSAG). 2 disordered regions span residues 76–142 (KRTS…GNSG) and 171–225 (RYSL…NDYH). The span at 101–113 (AHEDAETTFREFG) shows a compositional bias: basic and acidic residues. Residues 115-142 (KQSSKVLNISSSTGQNSKSRTTSLGNSG) are compositionally biased toward polar residues. Ser137 carries the phosphoserine modification. The segment covering 208–225 (GSQEKKSESGGKSKNDYH) has biased composition (basic and acidic residues). At Ser280 the chain carries Phosphoserine. The tract at residues 404–429 (PTLSEPKPAYVPPEDVEKEPSTLSNQ) is disordered. Ser504 and Ser507 each carry phosphoserine. Disordered regions lie at residues 510–938 (GGNQ…FRSM) and 961–993 (EKKE…THTT). A Glycyl lysine isopeptide (Lys-Gly) (interchain with G-Cter in ubiquitin) cross-link involves residue Lys526. Composition is skewed to acidic residues over residues 550-561 (DQEEALSDNEPE) and 595-644 (KDDD…DDEY). A Phosphoserine modification is found at Ser556. 2 stretches are compositionally biased toward polar residues: residues 688–699 (SENAEVSQSGTN) and 710–735 (YLTN…TDTT). Residue Lys743 forms a Glycyl lysine isopeptide (Lys-Gly) (interchain with G-Cter in ubiquitin) linkage. Low complexity predominate over residues 761–773 (SSTSSSIYSIETS). Polar residues-rich tracts occupy residues 774 to 810 (PNID…SSHQ) and 827 to 845 (NRSC…TLSH). The span at 850-860 (PASDSSSSPPY) shows a compositional bias: low complexity. Residues 916-930 (PPARKSSFEKERPAK) show a composition bias toward basic and acidic residues. A phosphoserine mark is found at Ser980 and Ser1022.

It belongs to the SEG1 family. In terms of assembly, component of eisosomes, large cytoplasmic protein assemblies that localize to specialized domains termed MCCs on the plasma membrane.

It localises to the cell membrane. In terms of biological role, likely plays only a minor role in eisosome assembly. This Saccharomyces cerevisiae (strain ATCC 204508 / S288c) (Baker's yeast) protein is Eisosome protein SEG2 (SEG2).